The primary structure comprises 318 residues: L-malyl-CoA/beta-methylmalyl-CoA lyase (318 aa).

4 residues coordinate substrate: Phe-19, Arg-24, Lys-30, and Arg-76. The Mg(2+) site is built by Glu-141 and Asp-168. Residues 167-168 (AD) and 251-252 (IH) each bind substrate.

This sequence belongs to the HpcH/HpaI aldolase family. Homohexamer. Dimer of trimers. The cofactor is Mg(2+). It depends on Mn(2+) as a cofactor.

The catalysed reaction is (S)-malyl-CoA = glyoxylate + acetyl-CoA. It catalyses the reaction (2R,3S)-beta-methylmalyl-CoA = propanoyl-CoA + glyoxylate. In terms of biological role, involved in the ethylmalonyl-CoA pathway for acetate assimilation. Catalyzes the reversible condensation of glyoxylate and acetyl-CoA to L-malyl-CoA and the reversible condensation of glyoxylate and propionyl-CoA to yield beta-methylmalyl-CoA. The polypeptide is L-malyl-CoA/beta-methylmalyl-CoA lyase (Cereibacter sphaeroides (strain ATCC 17029 / ATH 2.4.9) (Rhodobacter sphaeroides)).